The following is a 103-amino-acid chain: Protein S100-A16 (103 aa).

The region spanning 12–47 is the EF-hand 1; degenerate domain; the sequence is VVVLVENFYKYVSKHSLVKNKISKSSFRKMLQKELN. The region spanning 54-89 is the EF-hand 2 domain; the sequence is GNRKAADKLIQNLDANHDGRISFDEYWTLIGGITSP. Asp-67, Asn-69, Asp-71, Arg-73, and Glu-78 together coordinate Ca(2+).

The protein belongs to the S-100 family. In terms of assembly, homodimer. Interacts with TP53.

The protein localises to the nucleus. The protein resides in the nucleolus. It is found in the cytoplasm. Functionally, calcium-binding protein. Binds one calcium ion per monomer. Can promote differentiation of adipocytes (in vitro). Overexpression in preadipocytes increases their proliferation, enhances adipogenesis and reduces insulin-stimulated glucose uptake. The polypeptide is Protein S100-A16 (S100A16) (Bos taurus (Bovine)).